A 223-amino-acid polypeptide reads, in one-letter code: Sigma non-opioid intracellular receptor 1 (223 aa).

The Lumenal portion of the chain corresponds to 1–9 (MQWAAGRRW). The segment at 2-8 (QWAAGRR) is targeting to endoplasmic reticulum-associated lipid droplets. A helical transmembrane segment spans residues 10-30 (AWITLFLTIVAVLIQAVWLWL). The Cytoplasmic segment spans residues 31–223 (GTQSFVFQRE…LTTYLFGQDS (193 aa)). The tract at residues 99–106 (SLSEYVLL) is important for ligand-binding. Residues 177–223 (VIPSTLAFALSDTIFSTQDFLTLFYTLRAYARGLRLELTTYLFGQDS) are C-terminal hydrophobic region.

It belongs to the ERG2 family. As to quaternary structure, homotrimer. Forms a ternary complex with ANK2 and ITPR3. The complex is disrupted by agonists. Interacts with KCNA4. Interacts with KCNA2; cocaine consumption leads to increased interaction. Interacts with RNF112 in an oxidative stress-regulated manner.

It is found in the nucleus inner membrane. The protein resides in the nucleus outer membrane. The protein localises to the nucleus envelope. It localises to the cytoplasmic vesicle. Its subcellular location is the endoplasmic reticulum membrane. It is found in the membrane. The protein resides in the lipid droplet. The protein localises to the cell junction. It localises to the cell membrane. Its subcellular location is the cell projection. It is found in the growth cone. The protein resides in the postsynaptic density membrane. Functions in lipid transport from the endoplasmic reticulum and is involved in a wide array of cellular functions probably through regulation of the biogenesis of lipid microdomains at the plasma membrane. Involved in the regulation of different receptors it plays a role in BDNF signaling and EGF signaling. Also regulates ion channels like the potassium channel and could modulate neurotransmitter release. Plays a role in calcium signaling through modulation together with ANK2 of the ITP3R-dependent calcium efflux at the endoplasmic reticulum. Plays a role in several other cell functions including proliferation, survival and death. Originally identified for its ability to bind various psychoactive drugs it is involved in learning processes, memory and mood alteration. Necessary for proper mitochondrial axonal transport in motor neurons, in particular the retrograde movement of mitochondria. Plays a role in protecting cells against oxidative stress-induced cell death via its interaction with RNF112. In Trichosurus vulpecula (Brush-tailed possum), this protein is Sigma non-opioid intracellular receptor 1 (SIGMAR1).